Here is a 567-residue protein sequence, read N- to C-terminus: Proline--tRNA ligase (567 aa).

The protein belongs to the class-II aminoacyl-tRNA synthetase family. ProS type 1 subfamily. As to quaternary structure, homodimer.

It is found in the cytoplasm. The catalysed reaction is tRNA(Pro) + L-proline + ATP = L-prolyl-tRNA(Pro) + AMP + diphosphate. Catalyzes the attachment of proline to tRNA(Pro) in a two-step reaction: proline is first activated by ATP to form Pro-AMP and then transferred to the acceptor end of tRNA(Pro). As ProRS can inadvertently accommodate and process non-cognate amino acids such as alanine and cysteine, to avoid such errors it has two additional distinct editing activities against alanine. One activity is designated as 'pretransfer' editing and involves the tRNA(Pro)-independent hydrolysis of activated Ala-AMP. The other activity is designated 'posttransfer' editing and involves deacylation of mischarged Ala-tRNA(Pro). The misacylated Cys-tRNA(Pro) is not edited by ProRS. This is Proline--tRNA ligase from Streptomyces coelicolor (strain ATCC BAA-471 / A3(2) / M145).